The chain runs to 393 residues: S-adenosylmethionine synthase (393 aa).

His17 lines the ATP pocket. Asp19 serves as a coordination point for Mg(2+). A K(+)-binding site is contributed by Glu45. Residues Glu58 and Gln106 each contribute to the L-methionine site. The tract at residues 106–116 (QSAHIAQGVDA) is flexible loop. Residues 171 to 173 (DAK), Asp246, 252 to 253 (RK), Ala269, and Lys273 contribute to the ATP site. Asp246 provides a ligand contact to L-methionine. Residue Lys277 participates in L-methionine binding.

The protein belongs to the AdoMet synthase family. In terms of assembly, homotetramer; dimer of dimers. Requires Mg(2+) as cofactor. K(+) serves as cofactor.

It is found in the cytoplasm. It catalyses the reaction L-methionine + ATP + H2O = S-adenosyl-L-methionine + phosphate + diphosphate. Its pathway is amino-acid biosynthesis; S-adenosyl-L-methionine biosynthesis; S-adenosyl-L-methionine from L-methionine: step 1/1. Its function is as follows. Catalyzes the formation of S-adenosylmethionine (AdoMet) from methionine and ATP. The overall synthetic reaction is composed of two sequential steps, AdoMet formation and the subsequent tripolyphosphate hydrolysis which occurs prior to release of AdoMet from the enzyme. The chain is S-adenosylmethionine synthase from Roseobacter denitrificans (strain ATCC 33942 / OCh 114) (Erythrobacter sp. (strain OCh 114)).